A 118-amino-acid chain; its full sequence is UPF0251 protein Teth39_0655 (118 aa).

This sequence belongs to the UPF0251 family.

The protein is UPF0251 protein Teth39_0655 of Thermoanaerobacter pseudethanolicus (strain ATCC 33223 / 39E) (Clostridium thermohydrosulfuricum).